The following is a 218-amino-acid chain: CTP-dependent diacylglycerol kinase 1 (218 aa).

Residues 1 to 19 (MSTKLTWSQWSKKHEIPRK) are Lumenal-facing. The chain crosses the membrane as a helical span at residues 20–37 (ALHTSIGFFALLLQGCGY). Residue H38 is a topological domain, cytoplasmic. A helical membrane pass occupies residues 39-59 (AAQIIPVIEIGFIPAFTGDVI). Residues 60-88 (RFNWPAFSRLYNRVIGPLMRESEKNAWNG) lie on the Lumenal side of the membrane. Residues 89–109 (VIFYMIGVWIVLKVFPEEIAV) traverse the membrane as a helical segment. Residues 110 to 142 (MSVLLLSWCDTTASTVGRKWGKYTPKIAKNKSL) are Cytoplasmic-facing. The helical transmembrane segment at 143-163 (AGSLGAFVCGVFCCYVYWGLF) threads the bilayer. Topologically, residues 164-179 (RTGPDSLAAQSRIPFP) are lumenal. The next 2 helical transmembrane spans lie at 180–200 (WLCL…VWGL) and 201–217 (DDNL…LYLI). Residue M218 is a topological domain, lumenal.

This sequence belongs to the DGK1 family. The cofactor is Ca(2+). It depends on Mg(2+) as a cofactor.

Its subcellular location is the endoplasmic reticulum membrane. The protein resides in the nucleus membrane. The catalysed reaction is a 1,2-diacyl-sn-glycerol + CTP = a 1,2-diacyl-sn-glycero-3-phosphate + CDP + H(+). CTP-dependent diacylglycerol kinase that catalyzes the phosphorylation of diacylglycerol (DAG) to phosphatidate (PA). Controls phosphatidate levels at the nuclear envelope. Counteracts the activity of PA phosphatase ned1. May be involved in vesicle trafficking between the endoplasmic reticulum and the Golgi apparatus. Involved in pre-tRNA splicing. The polypeptide is CTP-dependent diacylglycerol kinase 1 (ptp4) (Schizosaccharomyces pombe (strain 972 / ATCC 24843) (Fission yeast)).